The following is a 262-amino-acid chain: Acyl-coenzyme A diphosphatase FITM2 (262 aa).

Residues 1–23 are Cytoplasmic-facing; sequence MEHLERCEWLLRGTLVRAAVRRY. A helical transmembrane segment spans residues 24–44; the sequence is LPWALVASMLAGSLLKELSPL. The Lumenal segment spans residues 45–57; it reads PESYLSNKRNVLN. Residues 58–78 traverse the membrane as a helical segment; the sequence is VYFVKVAWAWTFCLLLPFIAL. Over 79–93 the chain is Cytoplasmic; sequence TNYHLTGKAGLVLRR. A helical membrane pass occupies residues 94–114; sequence LSTLLVGTAIWYICTSIFSNI. The Lumenal segment spans residues 115-145; it reads EHYTGSCYQSPALEGVRKEHQSKQQCHQEGG. A helical membrane pass occupies residues 146-166; that stretch reads FWHGFDISGHSFLLTFCALMI. His-155 is an active-site residue. Topologically, residues 167–190 are cytoplasmic; sequence VEEMSVLHEVKTDRSHCLHTAITT. Residues 191-211 traverse the membrane as a helical segment; the sequence is LVVALGILTFIWVLMFLCTAV. Residues 212–218 are Lumenal-facing; that stretch reads YFHNLSQ. His-214 is an active-site residue. The helical transmembrane segment at 219-239 threads the bilayer; the sequence is KVFGTLFGLLSWYGTYGFWYP. Topologically, residues 240 to 262 are cytoplasmic; that stretch reads KAFSPGLPPQSCSLNLKQDSYKK.

The protein belongs to the FIT family. FIT2 subfamily. Widely expressed.

The protein resides in the endoplasmic reticulum membrane. The catalysed reaction is an acyl-CoA + H2O = an acyl-4'-phosphopantetheine + adenosine 3',5'-bisphosphate + 2 H(+). The enzyme catalyses (9Z)-octadecenoyl-CoA + H2O = S-(9Z-octadecenoyl)-4'-phosphopantetheine + adenosine 3',5'-bisphosphate + 2 H(+). It carries out the reaction (5Z,8Z,11Z,14Z)-eicosatetraenoyl-CoA + H2O = S-(5Z,8Z,11Z,14Z-eicosatetraenoyl)-4'-phosphopantetheine + adenosine 3',5'-bisphosphate + 2 H(+). It catalyses the reaction hexadecanoyl-CoA + H2O = S-hexadecanoyl-4'-phosphopantetheine + adenosine 3',5'-bisphosphate + 2 H(+). Fatty acyl-coenzyme A (CoA) diphosphatase that hydrolyzes fatty acyl-CoA to yield acyl-4'-phosphopantetheine and adenosine 3',5'-bisphosphate. Preferentially hydrolyzes unsaturated long-chain acyl-CoA substrates such as oleoyl-CoA/(9Z)-octadecenoyl-CoA and arachidonoyl-CoA/(5Z,8Z,11Z,14Z)-eicosatetraenoyl-CoA in the endoplasmic reticulum (ER) lumen. This catalytic activity is required for maintaining ER structure and for lipid droplets (LDs) biogenesis, which are lipid storage organelles involved in maintaining lipid and energy homeostasis. Directly binds to diacylglycerol (DAGs) and triacylglycerol, which is also important for LD biogenesis. May support directional budding of nacent LDs from the ER into the cytosol by reducing DAG levels at sites of LD formation. Plays a role in the regulation of cell morphology and cytoskeletal organization. In Homo sapiens (Human), this protein is Acyl-coenzyme A diphosphatase FITM2.